A 565-amino-acid chain; its full sequence is Carboxylesterase 1D (565 aa).

Residues 1 to 18 (MGLYPLIWLSLAACTAWG) form the signal peptide. N-linked (GlcNAc...) asparagine glycosylation is present at asparagine 79. Cysteine 87 and cysteine 116 are disulfide-bonded. Catalysis depends on serine 221, which acts as the Acyl-ester intermediate. Cysteines 273 and 284 form a disulfide. Glutamate 353 functions as the Charge relay system in the catalytic mechanism. N6-succinyllysine is present on lysine 382. The active-site Charge relay system is histidine 466. Asparagine 489 carries an N-linked (GlcNAc...) asparagine glycan. The short motif at 562-565 (HVEL) is the Prevents secretion from ER element.

Belongs to the type-B carboxylesterase/lipase family. As to quaternary structure, homotrimer. Highest expression occurs in liver with lower levels in adipose tissue, kidney, heart, intestine, lung, testis and thymus.

The protein resides in the endoplasmic reticulum lumen. It localises to the cytoplasm. Its subcellular location is the cytosol. It is found in the lipid droplet. The protein localises to the microsome. The enzyme catalyses a carboxylic ester + H2O = an alcohol + a carboxylate + H(+). The catalysed reaction is a long-chain fatty acyl ethyl ester + H2O = a long-chain fatty acid + ethanol + H(+). It carries out the reaction all-trans-retinyl hexadecanoate + H2O = all-trans-retinol + hexadecanoate + H(+). In terms of biological role, major lipase in white adipose tissue. Involved in the metabolism of xenobiotics and of natural substrates. Hydrolyzes triacylglycerols and monoacylglycerols, with a preference for monoacylglycerols. The susceptibility of the substrate increases with decreasing acyl chain length of the fatty acid moiety. Catalyzes the synthesis of fatty acid ethyl esters. Hydrolyzes retinyl esters. The protein is Carboxylesterase 1D of Mus musculus (Mouse).